A 222-amino-acid chain; its full sequence is CCA-adding enzyme (222 aa).

Positions 50 and 53 each coordinate ATP. S50 and K53 together coordinate CTP. Mg(2+) is bound by residues D61, D63, and D112. Residues H135, K155, and Y164 each coordinate ATP. The CTP site is built by H135, K155, and Y164.

Belongs to the tRNA nucleotidyltransferase/poly(A) polymerase family. Archaeal CCA-adding enzyme subfamily. In terms of assembly, homodimer. Mg(2+) serves as cofactor.

The enzyme catalyses a tRNA precursor + 2 CTP + ATP = a tRNA with a 3' CCA end + 3 diphosphate. The catalysed reaction is a tRNA with a 3' CCA end + 2 CTP + ATP = a tRNA with a 3' CCACCA end + 3 diphosphate. In terms of biological role, catalyzes the addition and repair of the essential 3'-terminal CCA sequence in tRNAs without using a nucleic acid template. Adds these three nucleotides in the order of C, C, and A to the tRNA nucleotide-73, using CTP and ATP as substrates and producing inorganic pyrophosphate. tRNA 3'-terminal CCA addition is required both for tRNA processing and repair. Also involved in tRNA surveillance by mediating tandem CCA addition to generate a CCACCA at the 3' terminus of unstable tRNAs. While stable tRNAs receive only 3'-terminal CCA, unstable tRNAs are marked with CCACCA and rapidly degraded. This is CCA-adding enzyme from Thermoplasma acidophilum.